The sequence spans 142 residues: Complexin (142 aa).

Disordered stretches follow at residues 13–70 and 83–105; these read QLSA…MRQD and IVEAAPQEEPNPLMRKKKTPEEL. Positions 29 to 138 form a coiled coil; it reads GDDKEKAEEE…NELKTQIEGK (110 aa). Residues 31–70 are compositionally biased toward basic and acidic residues; sequence DKEKAEEEERERQEAIKEAEDRRKEKHRKMEEEREKMRQD. Cys-139 carries the cysteine methyl ester modification. Cys-139 carries the S-farnesyl cysteine lipid modification. The propeptide at 140–142 is removed in mature form; sequence VMQ.

This sequence belongs to the complexin/synaphin family. Binds to the SNARE core complex containing Snap25, synaptobrevin and Syx1A.

The protein resides in the membrane. Its function is as follows. Positively regulates a late step in synaptic vesicle exocytosis. The sequence is that of Complexin (cpx) from Drosophila melanogaster (Fruit fly).